Consider the following 572-residue polypeptide: Proline--tRNA ligase (572 aa).

The protein belongs to the class-II aminoacyl-tRNA synthetase family. ProS type 1 subfamily. As to quaternary structure, homodimer.

It is found in the cytoplasm. The catalysed reaction is tRNA(Pro) + L-proline + ATP = L-prolyl-tRNA(Pro) + AMP + diphosphate. Catalyzes the attachment of proline to tRNA(Pro) in a two-step reaction: proline is first activated by ATP to form Pro-AMP and then transferred to the acceptor end of tRNA(Pro). As ProRS can inadvertently accommodate and process non-cognate amino acids such as alanine and cysteine, to avoid such errors it has two additional distinct editing activities against alanine. One activity is designated as 'pretransfer' editing and involves the tRNA(Pro)-independent hydrolysis of activated Ala-AMP. The other activity is designated 'posttransfer' editing and involves deacylation of mischarged Ala-tRNA(Pro). The misacylated Cys-tRNA(Pro) is not edited by ProRS. The polypeptide is Proline--tRNA ligase (Caldicellulosiruptor saccharolyticus (strain ATCC 43494 / DSM 8903 / Tp8T 6331)).